Here is a 204-residue protein sequence, read N- to C-terminus: Urease accessory protein UreG (204 aa).

GTP is bound at residue 11–18 (GPVGAGKT).

The protein belongs to the SIMIBI class G3E GTPase family. UreG subfamily. In terms of assembly, homodimer. UreD, UreF and UreG form a complex that acts as a GTP-hydrolysis-dependent molecular chaperone, activating the urease apoprotein by helping to assemble the nickel containing metallocenter of UreC. The UreE protein probably delivers the nickel.

It is found in the cytoplasm. Its function is as follows. Facilitates the functional incorporation of the urease nickel metallocenter. This process requires GTP hydrolysis, probably effectuated by UreG. The protein is Urease accessory protein UreG of Staphylococcus saprophyticus subsp. saprophyticus (strain ATCC 15305 / DSM 20229 / NCIMB 8711 / NCTC 7292 / S-41).